A 258-amino-acid chain; its full sequence is 4-hydroxy-2-oxovalerate aldolase (258 aa).

The active-site Proton acceptor is His48. Gln149 provides a ligand contact to substrate. Position 151 (Glu151) interacts with Mg(2+). Substrate is bound by residues Ala176 and Asp177. Mg(2+) is bound at residue Asp177.

Belongs to the HpcH/HpaI aldolase family.

It carries out the reaction (S)-4-hydroxy-2-oxopentanoate = acetaldehyde + pyruvate. It functions in the pathway xenobiotic degradation; biphenyl degradation. Its function is as follows. Catalyzes the reversible retro-aldol cleavage of 4-hydroxy-2-oxovalerate to pyruvate and acetaldehyde. This Rhodococcus jostii (strain RHA1) protein is 4-hydroxy-2-oxovalerate aldolase (bphF).